The following is a 142-amino-acid chain: Transcription antitermination protein NusB (142 aa).

The protein belongs to the NusB family.

Involved in transcription antitermination. Required for transcription of ribosomal RNA (rRNA) genes. Binds specifically to the boxA antiterminator sequence of the ribosomal RNA (rrn) operons. The chain is Transcription antitermination protein NusB from Thermobifida fusca (strain YX).